Reading from the N-terminus, the 331-residue chain is MVSYKEAGVNIEEGYKSVDLIKKHASKTFTKGVLNNLGSFAGMFELPKYKNPVLVSGTDGVGTKLDIAFRMKKYNTVGIDCVAMCINDILCHGAKPLFFLDYIACGKLEAEVAAQLVEGVSNGCIQSECALIGGETAEMPGFYRDGEYDIAGFAVGIAEKDEIIDGSKIEDGDILIGIASSGPHSNGYSLIRKLVEDLHKDFEGNKIGNTLLTPTKIYVKPVMKLLEKYNIKGMAHVTGGGFYENIPRMFKEDFTAVINKKSYPLPNIFSHLISLGIEEDHMYNTFNMGIGFVLCVNEKDGENIIKDLIEMGEKGYKIGYVKKGDKSVELI.

The protein belongs to the AIR synthase family.

It is found in the cytoplasm. It carries out the reaction 2-formamido-N(1)-(5-O-phospho-beta-D-ribosyl)acetamidine + ATP = 5-amino-1-(5-phospho-beta-D-ribosyl)imidazole + ADP + phosphate + H(+). It participates in purine metabolism; IMP biosynthesis via de novo pathway; 5-amino-1-(5-phospho-D-ribosyl)imidazole from N(2)-formyl-N(1)-(5-phospho-D-ribosyl)glycinamide: step 2/2. This is Phosphoribosylformylglycinamidine cyclo-ligase from Clostridium botulinum (strain ATCC 19397 / Type A).